The sequence spans 141 residues: AsCystatin (141 aa).

The signal sequence occupies residues 1–26 (MVHSQLPVAAPLRLLCALLLLPLATM). Positions 29-129 (GGLSPRSVTD…CRFQVWSCPW (101 aa)) constitute a Cystatin domain. The short motif at 73-77 (QVVTG) is the Secondary area of contact element. 2 disulfides stabilise this stretch: C91-C107 and C120-C140.

It belongs to the cystatin family. In terms of tissue distribution, expressed at a low level by the venom gland (at protein level).

Its subcellular location is the secreted. Recombinant AsCystatin inhibits various C1 cysteine proteases including cathepsin L (Ki is 0.89 pM), papain (Ki is 1.74 pM) and cathepsin B (Ki is 0.69 nM). This activity has also been observed in the crude venom. This protein has no toxic activity and its function in the venom is unknown. It may play a role as a housekeeping or regulatory protein. This Austrelaps superbus (Lowland copperhead snake) protein is AsCystatin.